The chain runs to 207 residues: Small ribosomal subunit protein uS4c (207 aa).

Residues 22 to 51 (TQKNCTRDFPPGQHGPKKKGGGNQKTKESQ) form a disordered region. Residues 97 to 158 (MRLDTIIFRL…NSQNFVKNLL (62 aa)) enclose the S4 RNA-binding domain.

The protein belongs to the universal ribosomal protein uS4 family. As to quaternary structure, part of the 30S ribosomal subunit. Contacts protein S5. The interaction surface between S4 and S5 is involved in control of translational fidelity.

The protein resides in the plastid. Its subcellular location is the chloroplast. Functionally, one of the primary rRNA binding proteins, it binds directly to 16S rRNA where it nucleates assembly of the body of the 30S subunit. Its function is as follows. With S5 and S12 plays an important role in translational accuracy. This is Small ribosomal subunit protein uS4c (rps4) from Chlorella vulgaris (Green alga).